The primary structure comprises 120 residues: Membrane-anchored ubiquitin-fold protein 5 (120 aa).

A Ubiquitin-like domain is found at 7 to 72 (IELKFRLADG…ILENNKTLSE (66 aa)). Residue Cys115 is the site of S-palmitoyl cysteine attachment. Cys117 carries the cysteine methyl ester modification. Cys117 carries the S-geranylgeranyl cysteine lipid modification. Positions 118–120 (CIL) are cleaved as a propeptide — removed in mature form.

Ubiquitous.

Its subcellular location is the cell membrane. Functionally, may serve as docking site to facilitate the association of other proteins to the plasma membrane. The protein is Membrane-anchored ubiquitin-fold protein 5 (MUB5) of Arabidopsis thaliana (Mouse-ear cress).